We begin with the raw amino-acid sequence, 633 residues long: Leucine-rich repeat and IQ domain-containing protein 3 (633 aa).

LRR repeat units follow at residues 51-72 (SLRV…QSCK), 73-94 (KLIK…NFWS), and 98-119 (NLKL…CVLS). An LRRCT domain is found at 132 to 179 (CPVSLKKGYRHVLVNSIWPLKALDHHVISDEEIIQNWRLPERFKTFSP). An IQ domain is found at 215 to 244 (HNSPVLIIQRWIRGFIVRKHLSPYFKHKKH). The disordered stretch occupies residues 324-343 (SKQPRHHIHKGQKAMKAESE). Residues 325-336 (KQPRHHIHKGQK) show a composition bias toward basic residues. Positions 556-617 (IEKWEEQKYK…AKVEYIKTFY (62 aa)) form a coiled coil.

In Mus musculus (Mouse), this protein is Leucine-rich repeat and IQ domain-containing protein 3 (Lrriq3).